Reading from the N-terminus, the 663-residue chain is Translation factor GUF1 homolog, mitochondrial (663 aa).

The region spanning 64-250 (EKIRNFSIIA…AVIERIPPPP (187 aa)) is the tr-type G domain. GTP contacts are provided by residues 73-80 (AHIDHGKS), 143-147 (DTPGH), and 197-200 (NKID).

The protein belongs to the TRAFAC class translation factor GTPase superfamily. Classic translation factor GTPase family. LepA subfamily.

It localises to the mitochondrion inner membrane. The enzyme catalyses GTP + H2O = GDP + phosphate + H(+). In terms of biological role, promotes mitochondrial protein synthesis. May act as a fidelity factor of the translation reaction, by catalyzing a one-codon backward translocation of tRNAs on improperly translocated ribosomes. Binds to mitochondrial ribosomes in a GTP-dependent manner. The chain is Translation factor GUF1 homolog, mitochondrial from Arabidopsis thaliana (Mouse-ear cress).